We begin with the raw amino-acid sequence, 308 residues long: Tetraacyldisaccharide 4'-kinase (308 aa).

Position 63–70 (63–70 (SFGGNGKT)) interacts with ATP.

It belongs to the LpxK family.

It carries out the reaction a lipid A disaccharide + ATP = a lipid IVA + ADP + H(+). Its pathway is glycolipid biosynthesis; lipid IV(A) biosynthesis; lipid IV(A) from (3R)-3-hydroxytetradecanoyl-[acyl-carrier-protein] and UDP-N-acetyl-alpha-D-glucosamine: step 6/6. Its function is as follows. Transfers the gamma-phosphate of ATP to the 4'-position of a tetraacyldisaccharide 1-phosphate intermediate (termed DS-1-P) to form tetraacyldisaccharide 1,4'-bis-phosphate (lipid IVA). The polypeptide is Tetraacyldisaccharide 4'-kinase (Campylobacter jejuni subsp. jejuni serotype O:6 (strain 81116 / NCTC 11828)).